A 293-amino-acid polypeptide reads, in one-letter code: Undecaprenyl-diphosphatase (293 aa).

6 helical membrane passes run 74–94, 107–127, 134–154, 209–229, 243–263, and 271–291; these read VLVFFAKEIWQIITGWFAGVF, WMIIVATIPVVILGVLGKDLI, MWITASVLILFSLVFILAEKM, FLLAIPAVLGSGLYSLPDAFA, VGTLVAFVVGYISIAWLMKFV, and FAAYRIPAGLLVMLLLALGML.

This sequence belongs to the UppP family.

The protein localises to the cell membrane. It carries out the reaction di-trans,octa-cis-undecaprenyl diphosphate + H2O = di-trans,octa-cis-undecaprenyl phosphate + phosphate + H(+). Its function is as follows. Catalyzes the dephosphorylation of undecaprenyl diphosphate (UPP). Confers resistance to bacitracin. The protein is Undecaprenyl-diphosphatase of Corynebacterium glutamicum (strain ATCC 13032 / DSM 20300 / JCM 1318 / BCRC 11384 / CCUG 27702 / LMG 3730 / NBRC 12168 / NCIMB 10025 / NRRL B-2784 / 534).